Reading from the N-terminus, the 106-residue chain is Urease subunit beta (106 aa).

It belongs to the urease beta subunit family. Heterotrimer of UreA (gamma), UreB (beta) and UreC (alpha) subunits. Three heterotrimers associate to form the active enzyme.

The protein localises to the cytoplasm. It catalyses the reaction urea + 2 H2O + H(+) = hydrogencarbonate + 2 NH4(+). It participates in nitrogen metabolism; urea degradation; CO(2) and NH(3) from urea (urease route): step 1/1. The protein is Urease subunit beta of Prochlorococcus marinus (strain MIT 9215).